Reading from the N-terminus, the 313-residue chain is C-type lectin domain-containing protein 162 (313 aa).

An N-terminal signal peptide occupies residues 1-17; it reads MNIFTLLFIYFLSDTVA. Residues N28 and N41 are each glycosylated (N-linked (GlcNAc...) asparagine). The C-type lectin domain maps to 28-145; sequence NATGCFQFFR…DAMFLPFVCE (118 aa). A disulfide bridge connects residues C49 and C144. N-linked (GlcNAc...) asparagine glycosylation occurs at N213. Residues 244–313 form a disordered region; the sequence is VSQTETEMSR…RSKTIQISRG (70 aa). A compositionally biased stretch (basic and acidic residues) spans 250–259; it reads EMSRSRKEKE. Residues N279 and N300 are each glycosylated (N-linked (GlcNAc...) asparagine). Residues 291–304 show a composition bias toward basic and acidic residues; sequence SKEKREREENETIR.

Its subcellular location is the secreted. The chain is C-type lectin domain-containing protein 162 (clec-162) from Caenorhabditis elegans.